Reading from the N-terminus, the 245-residue chain is Probable inactive carboxylesterase Os04g0669700 (245 aa).

Catalysis depends on charge relay system residues S115 and H201.

This sequence belongs to the AB hydrolase superfamily. AB hydrolase 2 family.

The chain is Probable inactive carboxylesterase Os04g0669700 from Oryza sativa subsp. japonica (Rice).